The primary structure comprises 132 residues: Inactive D-aminoacyl-tRNA deacylase (132 aa).

This sequence belongs to the DTD family.

A non-functional D-aminoacyl-tRNA deacylase. The polypeptide is Inactive D-aminoacyl-tRNA deacylase (Bacillus subtilis (strain 168)).